The sequence spans 87 residues: Large ribosomal subunit protein eL33 (87 aa).

This sequence belongs to the eukaryotic ribosomal protein eL33 family.

The chain is Large ribosomal subunit protein eL33 from Pyrococcus woesei.